The sequence spans 440 residues: Phenylacetate-coenzyme A ligase (440 aa).

The protein belongs to the phenylacetyl-CoA ligase family. Monomer.

It carries out the reaction 2-phenylacetate + ATP + CoA = phenylacetyl-CoA + AMP + diphosphate. It participates in aromatic compound metabolism; phenylacetate degradation. Its activity is regulated as follows. Inhibition of activity is observed in the presence of a 1 mM of the divalent cations zinc, copper, and nickel. In terms of biological role, catalyzes the activation of phenylacetic acid (PA) to phenylacetyl-CoA (PA-CoA). Involved in the phenylalanine metabolism. The chain is Phenylacetate-coenzyme A ligase (paaK) from Aromatoleum evansii (Azoarcus evansii).